The chain runs to 232 residues: 2,3,4,5-tetrahydropyridine-2,6-dicarboxylate N-acetyltransferase (232 aa).

Belongs to the transferase hexapeptide repeat family. DapH subfamily.

The enzyme catalyses (S)-2,3,4,5-tetrahydrodipicolinate + acetyl-CoA + H2O = L-2-acetamido-6-oxoheptanedioate + CoA. The protein operates within amino-acid biosynthesis; L-lysine biosynthesis via DAP pathway; LL-2,6-diaminopimelate from (S)-tetrahydrodipicolinate (acetylase route): step 1/3. Catalyzes the transfer of an acetyl group from acetyl-CoA to tetrahydrodipicolinate. The sequence is that of 2,3,4,5-tetrahydropyridine-2,6-dicarboxylate N-acetyltransferase from Streptococcus uberis (strain ATCC BAA-854 / 0140J).